Reading from the N-terminus, the 522-residue chain is Lysine--tRNA ligase (522 aa).

The 'HIGH' region signature appears at 44–52 (PSGLPHIGT). Positions 290 to 294 (KISKS) match the 'KMSKS' region motif. Lys293 serves as a coordination point for ATP.

Belongs to the class-I aminoacyl-tRNA synthetase family.

Its subcellular location is the cytoplasm. The enzyme catalyses tRNA(Lys) + L-lysine + ATP = L-lysyl-tRNA(Lys) + AMP + diphosphate. The protein is Lysine--tRNA ligase of Rickettsia africae (strain ESF-5).